A 710-amino-acid chain; its full sequence is Low-temperature-induced 78 kDa protein (710 aa).

Disordered regions lie at residues 1-198 (MDQT…LDGQ), 225-269 (YQSK…RDLS), and 305-507 (GFGD…STYT). Over residues 14 to 25 (QHPEEVEHHENG) the composition is skewed to basic and acidic residues. The span at 29 to 41 (MFRKVKARAKKFK) shows a compositional bias: basic residues. Positions 49–58 (QSNEHEQDHD) are enriched in basic and acidic residues. Over residues 59–73 (LVEEDDDDDELEPEV) the composition is skewed to acidic residues. Residues 138–168 (SDKEEKRDVPIHHPLSELSDREESRETHHES) are compositionally biased toward basic and acidic residues. Residues 169-187 (LNTPVSLLSGTEDVTSTFA) are compositionally biased toward polar residues. 5 repeat units span residues 303–316 (PVGF…ELEK), 317–331 (DFPT…KTET), 336–350 (NSPS…KTES), 357–370 (PMGF…ELEK), and 398–412 (NFPV…KNES). Residues 303–370 (PVGFGDESGA…GSESGAELEK (68 aa)) are 2 X 14 AA repeats of P-[MV]-G-F-G-[DS]-E-S-G-A-E-L-E-K. 6 stretches are compositionally biased toward basic and acidic residues: residues 313-331 (ELEK…KTET), 340-352 (RSHE…ESGN), 367-380 (ELEK…DSGR), 402-418 (RSHE…DKDV), 442-466 (EDKF…KTET), and 475-487 (SHPK…KESR). Positions 317–412 (DFPTRSHDFD…SHELDLKNES (96 aa)) are 3 X 15 AA repeats of [DN]-[FS]-P-[STV]-R-S-H-[DE]-[FL]-D-[LM]-K-[NT]-E-[ST]. Repeat copies occupy residues 510–514 (FASML), 532–536 (VDEKL), and 550–554 (VTTKL). The 5 X 5 AA repeats of [FV]-[ADT]-[EST]-[KM]-L stretch occupies residues 510–600 (FASMLGYSGE…AFSDMVAEKL (91 aa)). Residues 537–577 (TPVNEKDQETESAVTTKLPISGGGSGVEEQRGEDKSVSGRD) are disordered. Over residues 564-577 (EEQRGEDKSVSGRD) the composition is skewed to basic and acidic residues. 2 repeat units span residues 579-583 (VAEKL) and 596-600 (VAEKL). The disordered stretch occupies residues 601 to 710 (QIGGEEEKKE…STVVPVQKEL (110 aa)). Positions 605-626 (EEEKKETTTKEVEKISTEKAAS) are enriched in basic and acidic residues. Ser626 is modified (phosphoserine). Residues 638-654 (GGGGMVGRIKGWFGGGA) show a composition bias toward gly residues. 2 consecutive repeat copies span residues 648–670 (GWFG…EEAP) and 674–696 (GWFG…EESP). The 2 X 23 AA repeats stretch occupies residues 648–696 (GWFGGGATDEVKPESPHSVEEAPKSSGWFGGGATEEVKPKSPHSVEESP). Basic and acidic residues-rich tracts occupy residues 656–670 (DEVK…EEAP) and 682–693 (EEVKPKSPHSVE).

Belongs to the LTI78/LTI65 family. Accumulates rapidly in leaves, stems, roots, flower petals, filaments, and sepals during cold-acclimation.

It localises to the cytoplasm. Its function is as follows. Involved in responses to abiotic stresses. Regulates probably root elongation in cold conditions. This is Low-temperature-induced 78 kDa protein from Arabidopsis thaliana (Mouse-ear cress).